We begin with the raw amino-acid sequence, 102 residues long: Large ribosomal subunit protein bL21 (102 aa).

Belongs to the bacterial ribosomal protein bL21 family. In terms of assembly, part of the 50S ribosomal subunit. Contacts protein L20.

Functionally, this protein binds to 23S rRNA in the presence of protein L20. The sequence is that of Large ribosomal subunit protein bL21 from Ehrlichia chaffeensis (strain ATCC CRL-10679 / Arkansas).